An 883-amino-acid chain; its full sequence is Probable valine--tRNA ligase, cytoplasmic (883 aa).

Residues 1 to 23 (MTLKMDRKALKEEKKKQKLEKFL) are compositionally biased toward basic and acidic residues. A disordered region spans residues 1-49 (MTLKMDRKALKEEKKKQKLEKFLNKKTTQSKISKAPKPAKNKSSSGYDP). Residues 30–45 (SKISKAPKPAKNKSSS) are compositionally biased toward low complexity. Residues 82–92 (PNITGSLHIGH) carry the 'HIGH' region motif. The 'KMSKS' region motif lies at 586 to 590 (KMSKS). An ATP-binding site is contributed by Lys589.

Belongs to the class-I aminoacyl-tRNA synthetase family.

The protein localises to the cytoplasm. The catalysed reaction is tRNA(Val) + L-valine + ATP = L-valyl-tRNA(Val) + AMP + diphosphate. The polypeptide is Probable valine--tRNA ligase, cytoplasmic (Vairimorpha ceranae (strain BRL01) (Microsporidian parasite)).